The sequence spans 417 residues: Aromatic-amino-acid aminotransferase 1 (417 aa).

Position 258 is an N6-(pyridoxal phosphate)lysine (K258).

This sequence belongs to the class-I pyridoxal-phosphate-dependent aminotransferase family. In terms of assembly, homodimer. Pyridoxal 5'-phosphate serves as cofactor.

The enzyme catalyses an aromatic L-alpha-amino acid + 2-oxoglutarate = an aromatic oxo-acid + L-glutamate. Its function is as follows. Catalyzes the transamination of phenylalanine, tyrosine and tryptophan. Shows virtually no activity towards aspartic acid, alanine, valine or isoleucine. The polypeptide is Aromatic-amino-acid aminotransferase 1 (Thermococcus litoralis (strain ATCC 51850 / DSM 5473 / JCM 8560 / NS-C)).